The primary structure comprises 65 residues: uncharacterized protein (65 aa).

A DNA-binding region (ompR/PhoB-type) is located at residues 1-65 (MIALSVCWQI…ETGIGYRFML (65 aa)).

This is an uncharacterized protein from Escherichia coli (strain K12).